The following is a 291-amino-acid chain: Phosphate import ATP-binding protein PstB (291 aa).

Residues 45-286 (YSTQNLDLWY…PADKQTEDYI (242 aa)) enclose the ABC transporter domain. Residue 77-84 (GPSGCGKS) coordinates ATP.

The protein belongs to the ABC transporter superfamily. Phosphate importer (TC 3.A.1.7) family. The complex is composed of two ATP-binding proteins (PstB), two transmembrane proteins (PstC and PstA) and a solute-binding protein (PstS).

It localises to the cell membrane. The catalysed reaction is phosphate(out) + ATP + H2O = ADP + 2 phosphate(in) + H(+). Functionally, part of the ABC transporter complex PstSACB involved in phosphate import. Responsible for energy coupling to the transport system. In Staphylococcus epidermidis (strain ATCC 12228 / FDA PCI 1200), this protein is Phosphate import ATP-binding protein PstB.